A 968-amino-acid chain; its full sequence is RNA polymerase-associated protein RapA (968 aa).

Positions 164 to 334 constitute a Helicase ATP-binding domain; that stretch reads DVGRRHAPRV…FARLRLLDPN (171 aa). ATP is bound at residue 177–184; that stretch reads DEVGLGKT. Residues 280-283 carry the DEAH box motif; the sequence is DEAH. In terms of domain architecture, Helicase C-terminal spans 490–662; that stretch reads RVEWLMGYLT…YLASPDQTEG (173 aa).

The protein belongs to the SNF2/RAD54 helicase family. RapA subfamily. As to quaternary structure, interacts with the RNAP. Has a higher affinity for the core RNAP than for the holoenzyme. Its ATPase activity is stimulated by binding to RNAP.

Transcription regulator that activates transcription by stimulating RNA polymerase (RNAP) recycling in case of stress conditions such as supercoiled DNA or high salt concentrations. Probably acts by releasing the RNAP, when it is trapped or immobilized on tightly supercoiled DNA. Does not activate transcription on linear DNA. Probably not involved in DNA repair. This chain is RNA polymerase-associated protein RapA, found in Escherichia coli O9:H4 (strain HS).